A 138-amino-acid polypeptide reads, in one-letter code: Transcription antitermination protein NusB (138 aa).

Belongs to the NusB family.

In terms of biological role, involved in transcription antitermination. Required for transcription of ribosomal RNA (rRNA) genes. Binds specifically to the boxA antiterminator sequence of the ribosomal RNA (rrn) operons. The sequence is that of Transcription antitermination protein NusB from Alkaliphilus oremlandii (strain OhILAs) (Clostridium oremlandii (strain OhILAs)).